Here is a 292-residue protein sequence, read N- to C-terminus: MHLVVCIKQVPDSAQIRVHPVTNTIMRQGVPTIINPHDLAALEEALKLCDTYGGEVTVVTMGPKMAEDALRKALTFGAHRAVLLTDRHFAGSDTLATSFALAQAIAEIGETFGTPDVVFTGKQTIDGDTAQVGPGIAKRLDLQQLTYVAKILSIDAASREITVERRAEGGSQILRTGLPCLVTMLDGADAIRRGRLDDALRAARTKVVKWSAADAGIAEPANCGLRGSPTVVKRVFAPTSREQKARQIDTTNKPLREIADGLIAAIFADRPALKHDLGSTGQQGAPDVDRES.

Belongs to the ETF beta-subunit/FixA family. In terms of assembly, fixA and FixB form a heterodimer.

Its function is as follows. May play a role in a redox process involved in nitrogen fixation. The protein is Protein FixA (fixA) of Rhizobium meliloti (strain 1021) (Ensifer meliloti).